Consider the following 298-residue polypeptide: Tyrosine recombinase XerC (298 aa).

The region spanning 2–88 (TDLHTDVERY…ALRSFFDWLV (87 aa)) is the Core-binding (CB) domain. Positions 109–288 (HLPKNIDVDD…DFQHLASVYD (180 aa)) constitute a Tyr recombinase domain. Active-site residues include R148, K172, H240, R243, and H266. Y275 functions as the O-(3'-phospho-DNA)-tyrosine intermediate in the catalytic mechanism.

It belongs to the 'phage' integrase family. XerC subfamily. Forms a cyclic heterotetrameric complex composed of two molecules of XerC and two molecules of XerD, in which XerC interacts with XerD via its C-terminal region, XerD interacts with XerC via its C-terminal region and so on.

The protein localises to the cytoplasm. Its activity is regulated as follows. FtsK may regulate the catalytic switch between XerC and XerD in the heterotetrameric complex during the two steps of the recombination process. Site-specific tyrosine recombinase, which acts by catalyzing the cutting and rejoining of the recombining DNA molecules. Binds cooperatively to specific DNA consensus sequences that are separated from XerD binding sites by a short central region, forming the heterotetrameric XerC-XerD complex that recombines DNA substrates. The complex is essential to convert dimers of the bacterial chromosome into monomers to permit their segregation at cell division. It also contributes to the segregational stability of plasmids. In the complex XerC specifically exchanges the top DNA strands. The chain is Tyrosine recombinase XerC from Escherichia coli O127:H6 (strain E2348/69 / EPEC).